A 112-amino-acid chain; its full sequence is Divalent-cation tolerance protein CutA (112 aa).

Cu cation is bound by residues Cys16, His83, and His84.

The protein belongs to the CutA family. Homotrimer. It depends on Cu cation as a cofactor.

The protein resides in the cytoplasm. Involved in resistance toward heavy metals. In Shigella flexneri, this protein is Divalent-cation tolerance protein CutA.